The following is a 510-amino-acid chain: NAD(P)H-quinone oxidoreductase subunit 2 A, chloroplastic (510 aa).

The next 14 helical transmembrane spans lie at 31–51 (FIFP…IDLT), 59–79 (WFYF…LFRW), 99–119 (IFQF…VEYI), 124–144 (MAIT…MFLC), 149–169 (LITI…LSGY), 184–204 (LLMG…LYGL), 229–249 (ISIA…LAPF), 261–281 (PTPV…ALAT), 295–315 (WHLL…LLAI), 323–343 (MLAY…IVGD), 354–374 (YMLF…LFGL), 395–415 (ALSL…AGFF), 418–438 (LYLF…IGLL), and 484–504 (MTVC…ILAI).

The protein belongs to the complex I subunit 2 family. As to quaternary structure, NDH is composed of at least 16 different subunits, 5 of which are encoded in the nucleus.

The protein localises to the plastid. The protein resides in the chloroplast thylakoid membrane. The catalysed reaction is a plastoquinone + NADH + (n+1) H(+)(in) = a plastoquinol + NAD(+) + n H(+)(out). It catalyses the reaction a plastoquinone + NADPH + (n+1) H(+)(in) = a plastoquinol + NADP(+) + n H(+)(out). Functionally, NDH shuttles electrons from NAD(P)H:plastoquinone, via FMN and iron-sulfur (Fe-S) centers, to quinones in the photosynthetic chain and possibly in a chloroplast respiratory chain. The immediate electron acceptor for the enzyme in this species is believed to be plastoquinone. Couples the redox reaction to proton translocation, and thus conserves the redox energy in a proton gradient. The polypeptide is NAD(P)H-quinone oxidoreductase subunit 2 A, chloroplastic (Oryza sativa subsp. japonica (Rice)).